The sequence spans 74 residues: DUP240 protein DFP2 (74 aa).

It belongs to the DUP/COS family.

Its subcellular location is the cytoplasm. The protein resides in the membrane. The sequence is that of DUP240 protein DFP2 from Saccharomyces cerevisiae (strain ATCC 204508 / S288c) (Baker's yeast).